Here is a 256-residue protein sequence, read N- to C-terminus: Ribonuclease 3 (256 aa).

Residues Leu-3–Gly-125 enclose the RNase III domain. Residue Glu-38 participates in Mg(2+) binding. The active site involves Asp-42. Positions 111 and 114 each coordinate Mg(2+). Glu-114 is a catalytic residue. The DRBM domain maps to Asp-152–Lys-222. The interval Lys-229–Glu-256 is disordered.

It belongs to the ribonuclease III family. Homodimer. It depends on Mg(2+) as a cofactor.

It localises to the cytoplasm. It catalyses the reaction Endonucleolytic cleavage to 5'-phosphomonoester.. Functionally, digests double-stranded RNA. Involved in the processing of primary rRNA transcript to yield the immediate precursors to the large and small rRNAs (23S and 16S). Processes some mRNAs, and tRNAs when they are encoded in the rRNA operon. Processes pre-crRNA and tracrRNA of type II CRISPR loci if present in the organism. The sequence is that of Ribonuclease 3 from Cupriavidus pinatubonensis (strain JMP 134 / LMG 1197) (Cupriavidus necator (strain JMP 134)).